The chain runs to 195 residues: Large ribosomal subunit protein uL11m (195 aa).

The protein belongs to the universal ribosomal protein uL11 family. As to quaternary structure, component of the mitochondrial ribosome large subunit (39S) which comprises a 16S rRNA and about 50 distinct proteins.

Its subcellular location is the mitochondrion. This Caenorhabditis elegans protein is Large ribosomal subunit protein uL11m (mrpl-11).